The primary structure comprises 554 residues: Perforin-1 (554 aa).

Residues 1–20 form the signal peptide; it reads MATCLFLLGLFLLLPRPVPA. 3 cysteine pairs are disulfide-bonded: C22–C75, C30–C72, and C101–C175. Positions 26–374 constitute an MACPF domain; it reads TRSECKQKHK…HYIMSRARWQ (349 aa). Residues 128–148 traverse the membrane as a beta stranded segment; sequence WRVGLDVNPRPEANMRASVAG. N204 carries an N-linked (GlcNAc...) asparagine glycan. Intrachain disulfides connect C241-C407, C376-C392, C380-C394, and C396-C406. The chain crosses the membrane as a beta stranded span at residues 256 to 278; sequence CLNVEAQVSIGAQASVSSEYKAC. N375 is a glycosylation site (N-linked (GlcNAc...) asparagine). An EGF-like domain is found at 375–407; that stretch reads NCSRPCRSGQHKSSHDSCQCECQDSKVTNQDCC. The C2 domain occupies 395-513; it reads ECQDSKVTNQ…FHEVTCELNH (119 aa). Ca(2+)-binding residues include G428, D429, T432, A433, D435, N454, E467, D483, A484, D485, W488, D489, D490, and D491. 2 cysteine pairs are disulfide-bonded: C496–C509 and C524–C533. Residue N548 is glycosylated (N-linked (GlcNAc...) asparagine).

This sequence belongs to the complement C6/C7/C8/C9 family. As to quaternary structure, monomer, as soluble protein. Homooligomer; homooligomerizes to form a pore-forming ring. Ca(2+) serves as cofactor. Post-translationally, N-glycosylated. The glycosylation sites are facing the interior of the pore. In terms of tissue distribution, detected in cytotoxic T-lymphocytes and natural killer cells.

It is found in the cytolytic granule. It localises to the secreted. The protein localises to the cell membrane. The protein resides in the endosome lumen. Functionally, pore-forming protein that plays a key role in granzyme-mediated programmed cell death, and in defense against virus-infected or neoplastic cells. Can insert into the membrane of target cells in its calcium-bound form, oligomerize and form large pores. Promotes cytolysis and apoptosis of target cells by mediating the passage and uptake of cytotoxic granzymes. Facilitates the delivery of cationic cargo protein, while anionic or neural proteins are not delivered efficiently. Perforin pores allow the release of mature caspase-7 (CASP7) into the extracellular milieu. The polypeptide is Perforin-1 (Prf1) (Mus musculus (Mouse)).